The following is a 493-amino-acid chain: Galactose-1-phosphate uridylyltransferase (493 aa).

Belongs to the galactose-1-phosphate uridylyltransferase type 2 family.

The protein localises to the cytoplasm. The catalysed reaction is alpha-D-galactose 1-phosphate + UDP-alpha-D-glucose = alpha-D-glucose 1-phosphate + UDP-alpha-D-galactose. The protein operates within carbohydrate metabolism; galactose metabolism. This is Galactose-1-phosphate uridylyltransferase from Streptococcus thermophilus (strain ATCC BAA-250 / LMG 18311).